A 356-amino-acid chain; its full sequence is MGFVRPVCMTILFLLIVFVLSAPSSAMDLPATSGGHNRSNEEVEFIFQMWMSKHGKTYTNALGEKERRFQNFKDNLRFIDQHNAKNLSYQLGLTRFADLTVQEYRDLFPGSPKPKQRNLKTSRRYVPLAGDQLPESVDWRQEGAVSEIKDQGTCNSCWAFSTVAAVEGLNKIVTGELISLSEQELVDCNLVNNGCYGSGLMDTAFQFLINNNGLDSEKDYPYQGTQGSCNRKQSTSNKVITIDSYEDVPANDEISLQKAVAHQPVSVGVDKKSQEFMLYRSCIYNGPCGTNLDHALVIVGYGSENGQDYWIVRNSWGTTWGDAGYIKIARNFEDPKGLCGIAMLASYPIKNSASNA.

A signal peptide spans 1-26 (MGFVRPVCMTILFLLIVFVLSAPSSA). Positions 27–132 (MDLPATSGGH…RRYVPLAGDQ (106 aa)) are cleaved as a propeptide — activation peptide. 2 N-linked (GlcNAc...) asparagine glycosylation sites follow: asparagine 37 and asparagine 86. Intrachain disulfides connect cysteine 154/cysteine 195, cysteine 188/cysteine 229, and cysteine 288/cysteine 339. Cysteine 157 is an active-site residue. Residues histidine 294 and asparagine 314 contribute to the active site.

This sequence belongs to the peptidase C1 family.

Functionally, probable thiol protease. This Arabidopsis thaliana (Mouse-ear cress) protein is Probable cysteine protease RDL6.